We begin with the raw amino-acid sequence, 628 residues long: tRNA uridine 5-carboxymethylaminomethyl modification enzyme MnmG (628 aa).

13–18 (GAGHAG) provides a ligand contact to FAD. 273-287 (GPRYCPSIEDKIVRF) lines the NAD(+) pocket.

It belongs to the MnmG family. Homodimer. Heterotetramer of two MnmE and two MnmG subunits. The cofactor is FAD.

The protein resides in the cytoplasm. NAD-binding protein involved in the addition of a carboxymethylaminomethyl (cmnm) group at the wobble position (U34) of certain tRNAs, forming tRNA-cmnm(5)s(2)U34. This Buchnera aphidicola subsp. Acyrthosiphon pisum (strain 5A) protein is tRNA uridine 5-carboxymethylaminomethyl modification enzyme MnmG.